A 424-amino-acid polypeptide reads, in one-letter code: Protein CLP1 homolog 5 (424 aa).

ATP-binding positions include E16, T56, and 124–129; that span reads DSGKST.

It belongs to the Clp1 family. Clp1 subfamily. Forms a complex with cleavage and polyadenylation specificity factor (CPSF) subunits PCFS1, FIPS3 and CPSF30.

It is found in the nucleus. Functionally, required for endonucleolytic cleavage during polyadenylation-dependent pre-mRNA 3'-end formation. This chain is Protein CLP1 homolog 5, found in Arabidopsis thaliana (Mouse-ear cress).